The primary structure comprises 499 residues: Low-affinity inorganic phosphate transporter PitB (499 aa).

A run of 10 helical transmembrane segments spans residues 5-25 (FVGL…FVLF), 52-72 (LAVV…GLSV), 94-114 (LAMV…TWFF), 124-144 (LIGA…SSVM), 155-175 (IFSS…GLIF), 207-227 (PFWT…SHGA), 233-253 (GIGL…VVNM), 382-402 (APVW…MIGW), 430-450 (AAVS…THVL), and 473-493 (ILMA…GLYW).

Belongs to the inorganic phosphate transporter (PiT) (TC 2.A.20) family. Pit subfamily.

The protein resides in the cell inner membrane. The enzyme catalyses phosphate(in) + H(+)(in) = phosphate(out) + H(+)(out). Its function is as follows. Low-affinity inorganic phosphate transporter. The chain is Low-affinity inorganic phosphate transporter PitB from Escherichia coli (strain K12).